Consider the following 90-residue polypeptide: Small ribosomal subunit protein uS15 (90 aa).

It belongs to the universal ribosomal protein uS15 family. In terms of assembly, part of the 30S ribosomal subunit. Forms a bridge to the 50S subunit in the 70S ribosome, contacting the 23S rRNA.

In terms of biological role, one of the primary rRNA binding proteins, it binds directly to 16S rRNA where it helps nucleate assembly of the platform of the 30S subunit by binding and bridging several RNA helices of the 16S rRNA. Functionally, forms an intersubunit bridge (bridge B4) with the 23S rRNA of the 50S subunit in the ribosome. The chain is Small ribosomal subunit protein uS15 from Wolinella succinogenes (strain ATCC 29543 / DSM 1740 / CCUG 13145 / JCM 31913 / LMG 7466 / NCTC 11488 / FDC 602W) (Vibrio succinogenes).